A 64-amino-acid polypeptide reads, in one-letter code: Large ribosomal subunit protein uL29 (64 aa).

It belongs to the universal ribosomal protein uL29 family.

In Teredinibacter turnerae (strain ATCC 39867 / T7901), this protein is Large ribosomal subunit protein uL29.